The primary structure comprises 553 residues: Transcription factor IIIB 70 kDa subunit (553 aa).

The segment at 6–39 adopts a TFIIB-type zinc-finger fold; the sequence is KQQKCKTCGHTQFDVNRYTAAGDVSCLRCGTVLE. Positions 10, 13, 31, and 34 each coordinate Zn(2+). 2 tandem repeats follow at residues 98–174 and 193–272. The segment at 98-272 is interaction with TBP and with the Pol III subunit C34; that stretch reads IAAALKIPDY…LQRRLNEFKK (175 aa). The segment at 281-553 is interaction with TBP; the sequence is KSFREVENLE…KGLLGGNMGF (273 aa). The interval 473–523 is disordered; the sequence is KQEADELTGNTSKSSSGNRRKRNKSSLPAELRKELGDIDLDEDGTPRSAAD. Positions 480–489 are enriched in low complexity; it reads TGNTSKSSSG.

Belongs to the TFIIB family. TFIIIB comprises the TATA-binding protein (TBP), the B-related factor (BRF) and a 70 kDa polypeptide.

The protein localises to the nucleus. General activator of RNA polymerase III transcription. Interacts with TBP. Binds to Pol III subunit C34 and to the TAU135 component of TFIIIC. In Candida albicans (strain SC5314 / ATCC MYA-2876) (Yeast), this protein is Transcription factor IIIB 70 kDa subunit (TDS4).